We begin with the raw amino-acid sequence, 809 residues long: Lon protease (809 aa).

The Lon N-terminal domain occupies 42 to 242 (LVIYPLGGRP…KVLTLLKKEL (201 aa)). 395 to 402 (GPPGVGKT) is an ATP binding site. The Lon proteolytic domain occupies 629–809 (LTGVGIVTGL…YAEVAKLVFG (181 aa)). Residues serine 716 and lysine 759 contribute to the active site.

Belongs to the peptidase S16 family. As to quaternary structure, homohexamer. Organized in a ring with a central cavity.

It localises to the cytoplasm. The enzyme catalyses Hydrolysis of proteins in presence of ATP.. ATP-dependent serine protease that mediates the selective degradation of mutant and abnormal proteins as well as certain short-lived regulatory proteins. Required for cellular homeostasis and for survival from DNA damage and developmental changes induced by stress. Degrades polypeptides processively to yield small peptide fragments that are 5 to 10 amino acids long. Binds to DNA in a double-stranded, site-specific manner. The chain is Lon protease from Magnetococcus marinus (strain ATCC BAA-1437 / JCM 17883 / MC-1).